Here is a 728-residue protein sequence, read N- to C-terminus: Probable LRR receptor-like serine/threonine-protein kinase At1g14390 (728 aa).

The signal sequence occupies residues 1–27 (MHSSSKSQAFSLTFLLFLFLLPSVSES). Residues 28-356 (QLISSESRTL…EEDTGIELGL (329 aa)) are Extracellular-facing. 2 N-linked (GlcNAc...) asparagine glycosylation sites follow: Asn-55 and Asn-85. LRR repeat units follow at residues 74–96 (NGHVTELTVTGNRTVKLPGRFSS), 106–130 (LSNLKTLSLVSLGISGPLPSQIIRL), 131–155 (SSSLQSLNLSSNFISGNIPKEISSL), 157–178 (NLRSLVLANNLFNGSVPDLRGL), 179–202 (SNLQELNLGGNKLGPEVVPSLASN), 204–224 (ITISLKNNSFGSKIPEQIKKL), 225–248 (NKLQSLDLSSNKFTGSIPRFLLSL), 249–272 (PSLQNLSLAQNLLSGSLPNSSLCN), and 274–295 (KLRILDVSRNLLTGKLPSCFSS). 2 N-linked (GlcNAc...) asparagine glycosylation sites follow: Asn-138 and Asn-169. Residue Asn-210 is glycosylated (N-linked (GlcNAc...) asparagine). 2 N-linked (GlcNAc...) asparagine glycosylation sites follow: Asn-253 and Asn-267. A helical membrane pass occupies residues 357–377 (VIGIIIGVILVSAVLAGLVLV). The Cytoplasmic segment spans residues 378-728 (RMRKSRSKEE…ENLGLGGSEL (351 aa)). The Protein kinase domain maps to 421–709 (TMRSAVIGLS…DVVWNLQYTI (289 aa)).

The protein belongs to the protein kinase superfamily. Ser/Thr protein kinase family.

The protein localises to the membrane. The enzyme catalyses L-seryl-[protein] + ATP = O-phospho-L-seryl-[protein] + ADP + H(+). It catalyses the reaction L-threonyl-[protein] + ATP = O-phospho-L-threonyl-[protein] + ADP + H(+). In Arabidopsis thaliana (Mouse-ear cress), this protein is Probable LRR receptor-like serine/threonine-protein kinase At1g14390.